Consider the following 141-residue polypeptide: ATP synthase epsilon chain (141 aa).

This sequence belongs to the ATPase epsilon chain family. In terms of assembly, F-type ATPases have 2 components, CF(1) - the catalytic core - and CF(0) - the membrane proton channel. CF(1) has five subunits: alpha(3), beta(3), gamma(1), delta(1), epsilon(1). CF(0) has three main subunits: a, b and c.

The protein resides in the cell inner membrane. Functionally, produces ATP from ADP in the presence of a proton gradient across the membrane. The polypeptide is ATP synthase epsilon chain (Burkholderia thailandensis (strain ATCC 700388 / DSM 13276 / CCUG 48851 / CIP 106301 / E264)).